The primary structure comprises 114 residues: T cell receptor beta variable 6-5 (114 aa).

The signal sequence occupies residues 1-21; it reads MSIGLLCCAALSLLWAGPVNA. The 93-residue stretch at 22-114 folds into the Ig-like domain; sequence GVTQTPKFQV…TSVYFCASSY (93 aa). A disulfide bridge links cysteine 42 with cysteine 110. N-linked (GlcNAc...) asparagine glycosylation occurs at asparagine 84.

In terms of assembly, alpha-beta TR is a heterodimer composed of an alpha and beta chain; disulfide-linked. The alpha-beta TR is associated with the transmembrane signaling CD3 coreceptor proteins to form the TR-CD3 (TcR or TCR). The assembly of alpha-beta TR heterodimers with CD3 occurs in the endoplasmic reticulum where a single alpha-beta TR heterodimer associates with one CD3D-CD3E heterodimer, one CD3G-CD3E heterodimer and one CD247 homodimer forming a stable octameric structure. CD3D-CD3E and CD3G-CD3E heterodimers preferentially associate with TR alpha and TR beta chains, respectively. The association of the CD247 homodimer is the last step of TcR assembly in the endoplasmic reticulum and is required for transport to the cell surface.

The protein localises to the cell membrane. In terms of biological role, v region of the variable domain of T cell receptor (TR) beta chain that participates in the antigen recognition. Alpha-beta T cell receptors are antigen specific receptors which are essential to the immune response and are present on the cell surface of T lymphocytes. Recognize peptide-major histocompatibility (MH) (pMH) complexes that are displayed by antigen presenting cells (APC), a prerequisite for efficient T cell adaptive immunity against pathogens. Binding of alpha-beta TR to pMH complex initiates TR-CD3 clustering on the cell surface and intracellular activation of LCK that phosphorylates the ITAM motifs of CD3G, CD3D, CD3E and CD247 enabling the recruitment of ZAP70. In turn ZAP70 phosphorylates LAT, which recruits numerous signaling molecules to form the LAT signalosome. The LAT signalosome propagates signal branching to three major signaling pathways, the calcium, the mitogen-activated protein kinase (MAPK) kinase and the nuclear factor NF-kappa-B (NF-kB) pathways, leading to the mobilization of transcription factors that are critical for gene expression and essential for T cell growth and differentiation. The T cell repertoire is generated in the thymus, by V-(D)-J rearrangement. This repertoire is then shaped by intrathymic selection events to generate a peripheral T cell pool of self-MH restricted, non-autoaggressive T cells. Post-thymic interaction of alpha-beta TR with the pMH complexes shapes TR structural and functional avidity. This chain is T cell receptor beta variable 6-5, found in Homo sapiens (Human).